The primary structure comprises 488 residues: MTAEQLPPELQRVHMVGIGGAGMSGIARILLDRGGLVSGSDAKESRGVHALRARGALIRIGHDASALDLLPGGVTSVITTHAAIPKTNPELVEASRRGIPVMLRPLVLAKLMDGRTTVMVTGTHGKTTTTSMVIVALQHCGRDPSFAVGGELGEAGTNAHHGSGDYFVAEADESDGSLLEYTPHVAVVTNIEADHLDFYGSTEAYVGVFDAFVERLAPGGALVVCADDPGSAALAERSAELGIRVLRYGSAGHAEAALAATLVSWEQRGTGAVAQIQLAGEADPRSMRLSVPGRHMALNALGALLAAIEVGAPVGEVLDGLAGFEGVRRRFELVGTAESVRVFDDYAHHPTEVRATLEAVRSVVRQSGSGRLLVVFQPHLYSRTKAFAAEFGSALDAADEVFVLDVYAAREQPLTGISGASVAEHVTVPVRYLRDFSAVAEVVAAAAGPGDVVVTMGAGDVTLLGPEIVAALRMRADRSEPGRPGVLQ.

An ATP-binding site is contributed by 122 to 128 (GTHGKTT).

It belongs to the MurCDEF family.

It localises to the cytoplasm. The enzyme catalyses UDP-N-acetyl-alpha-D-muramate + L-alanine + ATP = UDP-N-acetyl-alpha-D-muramoyl-L-alanine + ADP + phosphate + H(+). It functions in the pathway cell wall biogenesis; peptidoglycan biosynthesis. In terms of biological role, cell wall formation. The protein is UDP-N-acetylmuramate--L-alanine ligase of Mycobacterium marinum (strain ATCC BAA-535 / M).